The primary structure comprises 339 residues: MSLCVGDAGALLLGPWPLTADPQGPLLDQDEESSVLEGSWSPSSSSLSSFSPPASGDAPSELLSLSWQPSDVLLTEQSTAGDVFPGMDWMTEKLDLNDFDLDSLIGSCDSEDSPGSPEDLLACLDSSMDLDLDSLPFGSADLDLPLGLDLPLPEEIKSEPLSPAPSVPSPPEEAPQDEHTEVPVLHPAGIMLSLSPSHIVVLLTPKEEQNISDCSDSDSGISVSGSPAHQSDLEPSSRAKPYSRPDPEASPALKGRVKTSSGAPKVEKKLKKMEQNKTAATRYRQKKRVEQESLNSECSELEKKNRELSEKADSLSREIQYLRDLLEEMRTAKQRKSKR.

Disordered stretches follow at residues 14 to 62 (GPWP…PSEL), 153 to 182 (PEEI…HTEV), and 209 to 313 (QNIS…EKAD). Low complexity predominate over residues 35-55 (VLEGSWSPSSSSLSSFSPPAS). Residues 162 to 173 (SPAPSVPSPPEE) are compositionally biased toward pro residues. Over residues 211–226 (ISDCSDSDSGISVSGS) the composition is skewed to low complexity. Basic and acidic residues predominate over residues 231–247 (SDLEPSSRAKPYSRPDP). The region spanning 266–329 (VEKKLKKMEQ…QYLRDLLEEM (64 aa)) is the bZIP domain. The tract at residues 268–288 (KKLKKMEQNKTAATRYRQKKR) is basic motif. The segment at 294 to 322 (LNSECSELEKKNRELSEKADSLSREIQYL) is leucine-zipper. Positions 300–313 (ELEKKNRELSEKAD) are enriched in basic and acidic residues.

This sequence belongs to the bZIP family. Binds DNA as a homodimer and as a heterodimer.

The protein resides in the nucleus. Functionally, transcription factor that binds the cAMP response element (CRE) (consensus: 5'-GTGACGT[AC][AG]-3') and displays two biological functions, as regulator of metabolic and redox processes under normal cellular conditions, and as master transcription factor during integrated stress response (ISR). Binds to asymmetric CRE's as a heterodimer and to palindromic CRE's as a homodimer. Core effector of the ISR, which is required for adaptation to various stress such as endoplasmic reticulum (ER) stress, amino acid starvation, mitochondrial stress or oxidative stress. During ISR, atf4 translation is induced via an alternative ribosome translation re-initiation mechanism in response to eif2s1/eIF-2-alpha phosphorylation, and stress-induced atf4 acts as a master transcription factor of stress-responsive genes in order to promote cell recovery. Promotes the transcription of genes linked to amino acid sufficiency and resistance to oxidative stress to protect cells against metabolic consequences of ER oxidation. In the absence of stress, atf4 translation is at low levels and it is required for normal metabolic processes such as embryonic lens formation, fetal liver hematopoiesis, bone development and synaptic plasticity. Acts as a regulator of osteoblast differentiation by promoting expression of osteoblast-specific genes. Regulates the circadian expression of the core clock components. Mainly acts as a transcriptional activator in cellular stress adaptation, but it can also act as a transcriptional repressor. The chain is Cyclic AMP-dependent transcription factor ATF-4 (atf4) from Danio rerio (Zebrafish).